A 688-amino-acid polypeptide reads, in one-letter code: Glycine--tRNA ligase beta subunit (688 aa).

Belongs to the class-II aminoacyl-tRNA synthetase family. Tetramer of two alpha and two beta subunits.

The protein localises to the cytoplasm. The catalysed reaction is tRNA(Gly) + glycine + ATP = glycyl-tRNA(Gly) + AMP + diphosphate. This chain is Glycine--tRNA ligase beta subunit, found in Listeria welshimeri serovar 6b (strain ATCC 35897 / DSM 20650 / CCUG 15529 / CIP 8149 / NCTC 11857 / SLCC 5334 / V8).